The primary structure comprises 346 residues: Elongation factor Ts (346 aa).

The tract at residues 80–83 (TDFV) is involved in Mg(2+) ion dislocation from EF-Tu.

Belongs to the EF-Ts family.

It localises to the cytoplasm. Functionally, associates with the EF-Tu.GDP complex and induces the exchange of GDP to GTP. It remains bound to the aminoacyl-tRNA.EF-Tu.GTP complex up to the GTP hydrolysis stage on the ribosome. The protein is Elongation factor Ts of Streptococcus thermophilus (strain CNRZ 1066).